The following is a 400-amino-acid chain: Acetate kinase (400 aa).

Mg(2+) is bound at residue Asn-9. Lys-16 provides a ligand contact to ATP. Arg-90 provides a ligand contact to substrate. Asp-147 (proton donor/acceptor) is an active-site residue. Residues 207–211 (HIGNG), 282–284 (DLR), and 330–334 (GIGEN) each bind ATP. Glu-385 contacts Mg(2+).

Belongs to the acetokinase family. Homodimer. It depends on Mg(2+) as a cofactor. Mn(2+) is required as a cofactor.

Its subcellular location is the cytoplasm. The enzyme catalyses acetate + ATP = acetyl phosphate + ADP. It functions in the pathway metabolic intermediate biosynthesis; acetyl-CoA biosynthesis; acetyl-CoA from acetate: step 1/2. Catalyzes the formation of acetyl phosphate from acetate and ATP. Can also catalyze the reverse reaction. The polypeptide is Acetate kinase (Staphylococcus aureus (strain USA300)).